The primary structure comprises 501 residues: MRQADSQTQPSPAEQETPQPAGPSNRSPPTMGPQQTGSRKRKAAEVDQGAGTSSSPGPAAPMATAGEGNAEGSMLLTKRPRRPVAHLSMVNYLKGRALGADGHPGLAGFEGDLRSYGVLRLPELLRERQLTLGPLNKVFASQWLNARQVVCGTKCNTLFVVDVKTDHIMRIPLMRDRVPDLSRGPPSCGIHAVELNPSKTLLATGGENPNSLAVYQLPTLDPVCLGDCQGHRDWIFAIAWMSDTVAVSGSRDGTVALWKVDPDMFNGSIAWHKDAGLPVYAHISPTDMEAIPKATTNPGNRKVRALAFSNKNQELGAVSLDGYFHLWKARSSLSRLLSLRLPYCRENVCLTYCDEFSLYAVGSQSHVSFLDLRQGQQNIPPLCSREGGTGVRSLSVHQHIVTVGTGHGSLLFYDIRAQKFLEERSAANPDMFPVPSGRKLKLTCGSGWINQDDLLENYVAGVEDFPNALYTHCYNWPEMKLFVGGGPLASGLHGNYAGLWS.

The segment covering 1–37 (MRQADSQTQPSPAEQETPQPAGPSNRSPPTMGPQQTG) has biased composition (polar residues). Residues 1–67 (MRQADSQTQP…PAAPMATAGE (67 aa)) form a disordered region. WD repeat units lie at residues 185–225 (PPSC…PVCL), 230–268 (GHRD…FNGS), 298–337 (PGNR…SRLL), and 384–423 (SREG…FLEE).

Belongs to the WD repeat DCAF12 family.

This Mus musculus (Mouse) protein is DDB1- and CUL4-associated factor 12-like protein 1 (Dcaf12l1).